The chain runs to 232 residues: Putative N-acetylmannosamine-6-phosphate 2-epimerase (232 aa).

Belongs to the NanE family.

It carries out the reaction an N-acyl-D-glucosamine 6-phosphate = an N-acyl-D-mannosamine 6-phosphate. The protein operates within amino-sugar metabolism; N-acetylneuraminate degradation; D-fructose 6-phosphate from N-acetylneuraminate: step 3/5. Its function is as follows. Converts N-acetylmannosamine-6-phosphate (ManNAc-6-P) to N-acetylglucosamine-6-phosphate (GlcNAc-6-P). The protein is Putative N-acetylmannosamine-6-phosphate 2-epimerase of Borrelia garinii subsp. bavariensis (strain ATCC BAA-2496 / DSM 23469 / PBi) (Borreliella bavariensis).